Here is a 234-residue protein sequence, read N- to C-terminus: uncharacterized protein (234 aa).

One can recognise an HTH tetR-type domain in the interval 24–83 (VERRNELVDGTIEAIRRHGRFLSMDEIAAEIGVSKTVLYRYFVDKNDLTTAVMMRFTQTT). A DNA-binding region (H-T-H motif) is located at residues 46-65 (SMDEIAAEIGVSKTVLYRYF).

This is an uncharacterized protein from Mycobacterium tuberculosis (strain CDC 1551 / Oshkosh).